The primary structure comprises 125 residues: uncharacterized protein (125 aa).

A helical transmembrane segment spans residues 100–120 (YFKVAFALAVLTPLAIWIFYI).

Its subcellular location is the membrane. This is an uncharacterized protein from Saccharomyces cerevisiae (strain ATCC 204508 / S288c) (Baker's yeast).